Consider the following 215-residue polypeptide: Beta-crystallin A3-2 (215 aa).

An N-terminal arm region spans residues 1–30; that stretch reads MEIPAIQTEREDITSEKMAQINPLPVPLGP. 2 Beta/gamma crystallin 'Greek key' domains span residues 31–70 and 71–117; these read WKITVYDQENFQGKRMEFTSSCANIMECGFDNIRSLKVEC and GAWI…RPIC. Residues 118–123 are connecting peptide; sequence SANHEE. Beta/gamma crystallin 'Greek key' domains are found at residues 124–165 and 166–214; these read SKLV…KVQC and GAWV…RRIQ.

It belongs to the beta/gamma-crystallin family. Homo/heterodimer, or complexes of higher-order. The structure of beta-crystallin oligomers seems to be stabilized through interactions between the N-terminal arms. The N-terminus is blocked.

In terms of biological role, crystallins are the dominant structural components of the vertebrate eye lens. This is Beta-crystallin A3-2 from Aquarana catesbeiana (American bullfrog).